Consider the following 407-residue polypeptide: S-adenosylmethionine synthase (407 aa).

Position 19 (histidine 19) interacts with ATP. Aspartate 21 provides a ligand contact to Mg(2+). Residue glutamate 47 participates in K(+) binding. Residues glutamate 60 and glutamine 103 each coordinate L-methionine. Residues glutamine 103–asparagine 113 form a flexible loop region. The interval isoleucine 107–glutamine 134 is disordered. Residues aspartate 178–lysine 180, aspartate 258, arginine 264–lysine 265, alanine 281, and lysine 285 contribute to the ATP site. Aspartate 258 contacts L-methionine. Lysine 289 provides a ligand contact to L-methionine.

This sequence belongs to the AdoMet synthase family. Homotetramer; dimer of dimers. Mg(2+) is required as a cofactor. The cofactor is K(+).

The protein localises to the cytoplasm. It catalyses the reaction L-methionine + ATP + H2O = S-adenosyl-L-methionine + phosphate + diphosphate. It functions in the pathway amino-acid biosynthesis; S-adenosyl-L-methionine biosynthesis; S-adenosyl-L-methionine from L-methionine: step 1/1. Its function is as follows. Catalyzes the formation of S-adenosylmethionine (AdoMet) from methionine and ATP. The overall synthetic reaction is composed of two sequential steps, AdoMet formation and the subsequent tripolyphosphate hydrolysis which occurs prior to release of AdoMet from the enzyme. This Corynebacterium glutamicum (strain ATCC 13032 / DSM 20300 / JCM 1318 / BCRC 11384 / CCUG 27702 / LMG 3730 / NBRC 12168 / NCIMB 10025 / NRRL B-2784 / 534) protein is S-adenosylmethionine synthase.